The following is a 53-amino-acid chain: Metallothionein (53 aa).

Residues 1 to 6 constitute a propeptide that is removed on maturation; sequence MRVIRM. Cu(+)-binding residues include cysteine 17, histidine 19, cysteine 22, cysteine 24, cysteine 32, histidine 33, cysteine 34, cysteine 43, and cysteine 45.

This sequence belongs to the metallothionein superfamily.

Its function is as follows. Metallothioneins are small proteins that have a high content of cysteine residues which allow them to bind heavy metal ions through clusters of thiolate bonds. MymT binds up to seven ions of Cu(+), with a preference for four to six Cu(+) ions, in a solvent-shielded core. MymT protects M.tuberculosis from copper toxicity. The polypeptide is Metallothionein (mymT) (Mycobacterium tuberculosis (strain CDC 1551 / Oshkosh)).